Here is a 156-residue protein sequence, read N- to C-terminus: Small ribosomal subunit protein uS7 (156 aa).

This sequence belongs to the universal ribosomal protein uS7 family. As to quaternary structure, part of the 30S ribosomal subunit. Contacts proteins S9 and S11.

In terms of biological role, one of the primary rRNA binding proteins, it binds directly to 16S rRNA where it nucleates assembly of the head domain of the 30S subunit. Is located at the subunit interface close to the decoding center, probably blocks exit of the E-site tRNA. This chain is Small ribosomal subunit protein uS7, found in Syntrophobacter fumaroxidans (strain DSM 10017 / MPOB).